Consider the following 428-residue polypeptide: Dihydroorotase (428 aa).

Zn(2+)-binding residues include histidine 59 and histidine 61. Residues 61–63 and asparagine 93 each bind substrate; that span reads HLR. Residues aspartate 151, histidine 178, and histidine 231 each coordinate Zn(2+). Asparagine 277 contributes to the substrate binding site. Residue aspartate 304 participates in Zn(2+) binding. Aspartate 304 is a catalytic residue. Residues histidine 308 and 322-323 each bind substrate; that span reads FG.

This sequence belongs to the metallo-dependent hydrolases superfamily. DHOase family. Class I DHOase subfamily. Zn(2+) serves as cofactor.

The enzyme catalyses (S)-dihydroorotate + H2O = N-carbamoyl-L-aspartate + H(+). Its pathway is pyrimidine metabolism; UMP biosynthesis via de novo pathway; (S)-dihydroorotate from bicarbonate: step 3/3. In terms of biological role, catalyzes the reversible cyclization of carbamoyl aspartate to dihydroorotate. The protein is Dihydroorotase of Bacillus cereus (strain ATCC 10987 / NRS 248).